The sequence spans 86 residues: uncharacterized protein (86 aa).

Its subcellular location is the mitochondrion. This is an uncharacterized protein from Marchantia polymorpha (Common liverwort).